The sequence spans 232 residues: Small ribosomal subunit protein uS3 (232 aa).

One can recognise a KH type-2 domain in the interval 39–107; the sequence is VRQFLTKELQ…PAQINIAEVR (69 aa). A disordered region spans residues 213–232; the sequence is AANAVEPKGDKPKKQRKGRK.

Belongs to the universal ribosomal protein uS3 family. As to quaternary structure, part of the 30S ribosomal subunit. Forms a tight complex with proteins S10 and S14.

Its function is as follows. Binds the lower part of the 30S subunit head. Binds mRNA in the 70S ribosome, positioning it for translation. The chain is Small ribosomal subunit protein uS3 from Vibrio campbellii (strain ATCC BAA-1116).